The chain runs to 216 residues: Flagellar transcriptional regulator FlhC (216 aa).

4 residues coordinate Zn(2+): Cys-137, Cys-140, Cys-157, and Cys-160.

It belongs to the FlhC family. As to quaternary structure, heterohexamer composed of two FlhC and four FlhD subunits. Each FlhC binds a FlhD dimer, forming a heterotrimer, and a hexamer assembles by dimerization of two heterotrimers. It depends on Zn(2+) as a cofactor.

It is found in the cytoplasm. Functions in complex with FlhD as a master transcriptional regulator that regulates transcription of several flagellar and non-flagellar operons by binding to their promoter region. Activates expression of class 2 flagellar genes, including fliA, which is a flagellum-specific sigma factor that turns on the class 3 genes. Also regulates genes whose products function in a variety of physiological pathways. This is Flagellar transcriptional regulator FlhC from Paraburkholderia atlantica.